The chain runs to 43 residues: MVLNDKVYENISPQTLACWFMDDGGMNGSHSHGLQFRVSVILK.

Belongs to the LAGLIDADG endonuclease family.

It is found in the mitochondrion. Mitochondrial DNA endonuclease involved in intron homing. The sequence is that of Probable intron-encoded DNA endonuclease 2 (hegI2) from Mycosarcoma maydis (Corn smut fungus).